The sequence spans 86 residues: UPF0335 protein mll3968 (86 aa).

The protein belongs to the UPF0335 family.

The sequence is that of UPF0335 protein mll3968 from Mesorhizobium japonicum (strain LMG 29417 / CECT 9101 / MAFF 303099) (Mesorhizobium loti (strain MAFF 303099)).